We begin with the raw amino-acid sequence, 255 residues long: Probable UDP-N-acetylglucosamine pyrophosphorylase (255 aa).

The enzyme catalyses N-acetyl-alpha-D-glucosamine 1-phosphate + UTP + H(+) = UDP-N-acetyl-alpha-D-glucosamine + diphosphate. It functions in the pathway nucleotide-sugar biosynthesis; UDP-N-acetyl-alpha-D-glucosamine biosynthesis; UDP-N-acetyl-alpha-D-glucosamine from N-acetyl-alpha-D-glucosamine 1-phosphate: step 1/1. The sequence is that of Probable UDP-N-acetylglucosamine pyrophosphorylase from Acanthamoeba polyphaga (Amoeba).